We begin with the raw amino-acid sequence, 405 residues long: Chalcone synthase (405 aa).

Residue cysteine 170 is part of the active site.

It belongs to the thiolase-like superfamily. Chalcone/stilbene synthases family.

The enzyme catalyses (E)-4-coumaroyl-CoA + 3 malonyl-CoA + 3 H(+) = 2',4,4',6'-tetrahydroxychalcone + 3 CO2 + 4 CoA. It functions in the pathway secondary metabolite biosynthesis; flavonoid biosynthesis. In terms of biological role, the primary product of this enzyme is 4,2',4',6'-tetrahydroxychalcone (also termed naringenin-chalcone or chalcone) which can under specific conditions spontaneously isomerize into naringenin. The polypeptide is Chalcone synthase (CHS) (Equisetum arvense (Field horsetail)).